The chain runs to 554 residues: Hydroxylamine reductase (554 aa).

[2Fe-2S] cluster contacts are provided by C3, C6, C18, and C25. Residues H252, E276, C320, C408, C436, C461, E495, and K497 each contribute to the hybrid [4Fe-2O-2S] cluster site. At C408 the chain carries Cysteine persulfide.

The protein belongs to the HCP family. Requires [2Fe-2S] cluster as cofactor. Hybrid [4Fe-2O-2S] cluster is required as a cofactor.

Its subcellular location is the cytoplasm. It carries out the reaction A + NH4(+) + H2O = hydroxylamine + AH2 + H(+). Functionally, catalyzes the reduction of hydroxylamine to form NH(3) and H(2)O. This chain is Hydroxylamine reductase, found in Photobacterium profundum (strain SS9).